The primary structure comprises 105 residues: Thioredoxin (105 aa).

A Thioredoxin domain is found at 2–105; sequence VKLIESKEAF…KLEASITEYA (104 aa). Lysine 3 is modified (N6-acetyllysine). Lysine 8 is modified (N6-succinyllysine). Active-site nucleophile residues include cysteine 32 and cysteine 35. Residues cysteine 32 and cysteine 35 are joined by a disulfide bond. Residue lysine 39 is modified to N6-acetyllysine. S-nitrosocysteine occurs at positions 62 and 69. Cysteine 73 is subject to S-nitrosocysteine; alternate. Lysine 94 carries the post-translational modification N6-acetyllysine; alternate. Lysine 94 carries the post-translational modification N6-succinyllysine; alternate.

This sequence belongs to the thioredoxin family. As to quaternary structure, homodimer; disulfide-linked. Interacts with TXNIP through the redox-active site. Interacts with MAP3K5 and CASP3. Interacts with APEX1; the interaction stimulates the FOS/JUN AP-1 DNA-binding activity in a redox-dependent manner. In the fully reduced protein, both Cys-69 and Cys-73 are nitrosylated in response to nitric oxide (NO). When two disulfide bonds are present in the protein, only Cys-73 is nitrosylated. Cys-73 can serve as donor for nitrosylation of target proteins.

Its subcellular location is the nucleus. It is found in the cytoplasm. It localises to the secreted. In terms of biological role, participates in various redox reactions through the reversible oxidation of its active center dithiol to a disulfide and catalyzes dithiol-disulfide exchange reactions. Plays a role in the reversible S-nitrosylation of cysteine residues in target proteins, and thereby contributes to the response to intracellular nitric oxide. Nitrosylates the active site Cys of CASP3 in response to nitric oxide (NO), and thereby inhibits caspase-3 activity. Induces the FOS/JUN AP-1 DNA binding activity in ionizing radiation (IR) cells through its oxidation/reduction status and stimulates AP-1 transcriptional activity. Functionally, ADF augments the expression of the interleukin-2 receptor TAC (IL2R/P55). The protein is Thioredoxin (Txn) of Mus musculus (Mouse).